Here is an 84-residue protein sequence, read N- to C-terminus: Small ribosomal subunit protein bS18B (84 aa).

The protein belongs to the bacterial ribosomal protein bS18 family. In terms of assembly, part of the 30S ribosomal subunit. Forms a tight heterodimer with protein bS6.

Its function is as follows. Binds as a heterodimer with protein bS6 to the central domain of the 16S rRNA, where it helps stabilize the platform of the 30S subunit. This chain is Small ribosomal subunit protein bS18B, found in Mycolicibacterium smegmatis (strain ATCC 700084 / mc(2)155) (Mycobacterium smegmatis).